Here is a 120-residue protein sequence, read N- to C-terminus: MITKADKNATRKKRHARVRAKLTGTAERPRLNVFRSNQHIYAQVIDDVNGVTLVSASTLDKDLALNGTSNTEAATKVGESVAKRAVEKGVKEVVFDRGGYLYHGRVKALAEAAREAGLQF.

Belongs to the universal ribosomal protein uL18 family. Part of the 50S ribosomal subunit; part of the 5S rRNA/L5/L18/L25 subcomplex. Contacts the 5S and 23S rRNAs.

In terms of biological role, this is one of the proteins that bind and probably mediate the attachment of the 5S RNA into the large ribosomal subunit, where it forms part of the central protuberance. The sequence is that of Large ribosomal subunit protein uL18 from Bacillus cereus (strain G9842).